The following is a 418-amino-acid chain: Putative ion-transport protein YfeO (418 aa).

The next 12 membrane-spanning stretches (helical) occupy residues 10-30 (LLLS…LIVV), 54-74 (DSPL…GLVI), 99-119 (ALPG…SLGP), 120-140 (EHPI…RLLP), 149-169 (ILAS…AALI), 186-206 (LFAP…FFHP), 223-243 (ILSG…AVWC), 258-278 (VLVL…GGPV), 300-320 (DYFL…ASGF), 322-342 (GGRI…LHEH), 343-363 (VPAV…VLVV), and 371-391 (LFMA…CIVM).

It belongs to the chloride channel (TC 2.A.49) family.

It is found in the cell membrane. The chain is Putative ion-transport protein YfeO from Escherichia coli (strain 55989 / EAEC).